The primary structure comprises 222 residues: N-acetyltransferase 8B (222 aa).

Residues 1–42 lie on the Cytoplasmic side of the membrane; that stretch reads MVSYHICEYQDSDYKSVVDVFTKGAEEYIPSTFRHLLLLPRT. Residues 43–67 traverse the membrane as a helical; Signal-anchor for type II membrane protein segment; sequence LLLLLGVSLALVLVSGSWLLAVVCI. Residues 62-217 enclose the N-acetyltransferase domain; that stretch reads LAVVCIFFLL…VGIRFVQLNY (156 aa). Over 68–222 the chain is Lumenal; that stretch reads FFLLPFLWFL…VQLNYSFPSA (155 aa). K99 carries the post-translational modification N6-acetyllysine.

It belongs to the NAT8 family. Acetylation on Lys-99 modulates enzymatic activity.

It is found in the endoplasmic reticulum-Golgi intermediate compartment membrane. The protein resides in the endoplasmic reticulum membrane. The enzyme catalyses L-lysyl-[protein] + acetyl-CoA = N(6)-acetyl-L-lysyl-[protein] + CoA + H(+). Its function is as follows. Endoplasmic reticulum (ER)-membrane-bound lysine N-acetyltransferase catalyzing the N6-acetylation of lysine residues in the lumen of the ER in various proteins, including PROM1 and BACE1, using acetyl-CoA as acetyl donor. Thereby, may regulate apoptosis through the acetylation and the regulation of the expression of PROM1. Acetylates and stabilizes BACE1 immature protein, leading to increased steady-state levels in neurons. By acting on BACE1 expression, may regulate amyloid beta-peptide formation. N(6)-lysine acetylation in ER maintains protein homeostasis and regulates reticulophagy. The protein is N-acetyltransferase 8B of Rattus norvegicus (Rat).